The primary structure comprises 642 residues: Threonine--tRNA ligase (642 aa).

Positions 1–61 (MPIITLPDGS…TEDAELQLIT (61 aa)) constitute a TGS domain. Residues 242–535 (DHRKLGKSLD…LVEHYEGKFP (294 aa)) form a catalytic region. Zn(2+) is bound by residues Cys333, His384, and His512.

This sequence belongs to the class-II aminoacyl-tRNA synthetase family. Homodimer. Zn(2+) is required as a cofactor.

The protein resides in the cytoplasm. The catalysed reaction is tRNA(Thr) + L-threonine + ATP = L-threonyl-tRNA(Thr) + AMP + diphosphate + H(+). Functionally, catalyzes the attachment of threonine to tRNA(Thr) in a two-step reaction: L-threonine is first activated by ATP to form Thr-AMP and then transferred to the acceptor end of tRNA(Thr). Also edits incorrectly charged L-seryl-tRNA(Thr). In Hydrogenovibrio crunogenus (strain DSM 25203 / XCL-2) (Thiomicrospira crunogena), this protein is Threonine--tRNA ligase.